The following is a 230-amino-acid chain: Demethylluteothin O-methyltransferase (230 aa).

It belongs to the methyltransferase superfamily.

It catalyses the reaction demethylluteothin + S-adenosyl-L-methionine = luteothin + S-adenosyl-L-homocysteine. Its pathway is antibiotic biosynthesis. It participates in polyketide biosynthesis. In terms of biological role, methyltransferase involved in the biosynthesis of the antibiotic aureothin, a nitroaryl polyketide metabolite with antifungal, cytotoxic and insecticidal activities. Catalyzes the methylation of demethylluteothin to luteothin (also called deoxyaureothin). Is specific for its gamma-pyrone substrate, and does not act on the alpha-pyrone isomer. This Streptomyces thioluteus protein is Demethylluteothin O-methyltransferase.